Reading from the N-terminus, the 92-residue chain is DNA-directed RNA polymerase subunit Rpo11 (92 aa).

Belongs to the archaeal Rpo11/eukaryotic RPB11/RPC19 RNA polymerase subunit family. Part of the RNA polymerase complex.

The protein resides in the cytoplasm. It catalyses the reaction RNA(n) + a ribonucleoside 5'-triphosphate = RNA(n+1) + diphosphate. DNA-dependent RNA polymerase (RNAP) catalyzes the transcription of DNA into RNA using the four ribonucleoside triphosphates as substrates. The polypeptide is DNA-directed RNA polymerase subunit Rpo11 (Methanosarcina barkeri (strain Fusaro / DSM 804)).